The chain runs to 933 residues: Isoleucine--tRNA ligase (933 aa).

Residues 57-67 (PYANGNIHVGH) carry the 'HIGH' region motif. Glu-554 contributes to the L-isoleucyl-5'-AMP binding site. The 'KMSKS' region signature appears at 595–599 (KMSKS). Lys-598 lines the ATP pocket.

The protein belongs to the class-I aminoacyl-tRNA synthetase family. IleS type 1 subfamily. In terms of assembly, monomer.

It localises to the cytoplasm. It carries out the reaction tRNA(Ile) + L-isoleucine + ATP = L-isoleucyl-tRNA(Ile) + AMP + diphosphate. Its function is as follows. Catalyzes the attachment of isoleucine to tRNA(Ile). As IleRS can inadvertently accommodate and process structurally similar amino acids such as valine, to avoid such errors it has two additional distinct tRNA(Ile)-dependent editing activities. One activity is designated as 'pretransfer' editing and involves the hydrolysis of activated Val-AMP. The other activity is designated 'posttransfer' editing and involves deacylation of mischarged Val-tRNA(Ile). In Streptococcus pyogenes serotype M18 (strain MGAS8232), this protein is Isoleucine--tRNA ligase.